We begin with the raw amino-acid sequence, 342 residues long: Glycerol-3-phosphate dehydrogenase [NAD(P)+] (342 aa).

3 residues coordinate NADPH: W11, R33, and K107. The sn-glycerol 3-phosphate site is built by K107, G143, and S145. An NADPH-binding site is contributed by A147. Sn-glycerol 3-phosphate contacts are provided by K198, D251, S261, R262, and N263. K198 (proton acceptor) is an active-site residue. Residue R262 coordinates NADPH. Residues V286 and E288 each contribute to the NADPH site.

The protein belongs to the NAD-dependent glycerol-3-phosphate dehydrogenase family.

It localises to the cytoplasm. It carries out the reaction sn-glycerol 3-phosphate + NAD(+) = dihydroxyacetone phosphate + NADH + H(+). It catalyses the reaction sn-glycerol 3-phosphate + NADP(+) = dihydroxyacetone phosphate + NADPH + H(+). Its pathway is membrane lipid metabolism; glycerophospholipid metabolism. Its function is as follows. Catalyzes the reduction of the glycolytic intermediate dihydroxyacetone phosphate (DHAP) to sn-glycerol 3-phosphate (G3P), the key precursor for phospholipid synthesis. This Paracidovorax citrulli (strain AAC00-1) (Acidovorax citrulli) protein is Glycerol-3-phosphate dehydrogenase [NAD(P)+].